A 470-amino-acid polypeptide reads, in one-letter code: ATP synthase subunit beta (470 aa).

ATP is bound at residue 158 to 165; sequence GGAGVGKT.

Belongs to the ATPase alpha/beta chains family. F-type ATPases have 2 components, CF(1) - the catalytic core - and CF(0) - the membrane proton channel. CF(1) has five subunits: alpha(3), beta(3), gamma(1), delta(1), epsilon(1). CF(0) has three main subunits: a(1), b(2) and c(9-12). The alpha and beta chains form an alternating ring which encloses part of the gamma chain. CF(1) is attached to CF(0) by a central stalk formed by the gamma and epsilon chains, while a peripheral stalk is formed by the delta and b chains.

The protein resides in the cell membrane. It catalyses the reaction ATP + H2O + 4 H(+)(in) = ADP + phosphate + 5 H(+)(out). In terms of biological role, produces ATP from ADP in the presence of a proton gradient across the membrane. The catalytic sites are hosted primarily by the beta subunits. In Halalkalibacterium halodurans (strain ATCC BAA-125 / DSM 18197 / FERM 7344 / JCM 9153 / C-125) (Bacillus halodurans), this protein is ATP synthase subunit beta.